The sequence spans 293 residues: 16S rRNA (guanine(1405)-N(7))-methyltransferase (293 aa).

S-adenosyl-L-methionine is bound by residues F47, 80 to 82, R86, A111, D134, 160 to 161, L176, and Q185; these read HAS and DL. A compositionally biased stretch (low complexity) spans 258-274; sequence GRPAPAEGAAEPGATRP. A disordered region spans residues 258-293; sequence GRPAPAEGAAEPGATRPVVDVPATARPDADRVDPTG. The span at 284–293 shows a compositional bias: basic and acidic residues; the sequence is PDADRVDPTG.

The protein belongs to the methyltransferase superfamily. Aminoglycoside resistance family.

The catalysed reaction is guanosine(1405) in 16S rRNA + S-adenosyl-L-methionine = N(7)-methylguanosine(1405) in 16S rRNA + S-adenosyl-L-homocysteine. Functionally, specifically methylates the N(7) position of guanine 1405 in 16S rRNA. Confers resistance to aminoglycosides. The protein is 16S rRNA (guanine(1405)-N(7))-methyltransferase (fmrO) of Micromonospora olivasterospora.